A 1008-amino-acid polypeptide reads, in one-letter code: Pre-mRNA-splicing factor SNU114 (1008 aa).

The residue at position 85 (Ser-85) is a Phosphoserine. A Phosphothreonine modification is found at Thr-88. The region spanning 131-338 (ERIINVGVIG…SYYYAHSIPS (208 aa)) is the tr-type G domain. The G1 stretch occupies residues 140–147 (GPLHSGKT). GTP is bound at residue 140–147 (GPLHSGKT). A G2 region spans residues 188 to 192 (GLSIK). The G3 stretch occupies residues 214–217 (DAPG). GTP contacts are provided by residues 214–218 (DAPGH) and 268–271 (NKLD). The G4 stretch occupies residues 268-271 (NKLD). Residues 315 to 317 (STK) form a G5 region. The interval 504 to 536 (TSQSESRQKRQLHDISKTETSNEDEDEDDETPS) is disordered. The span at 509 to 520 (SRQKRQLHDISK) shows a compositional bias: basic and acidic residues. Positions 524–536 (SNEDEDEDDETPS) are enriched in acidic residues.

This sequence belongs to the TRAFAC class translation factor GTPase superfamily. Classic translation factor GTPase family. EF-G/EF-2 subfamily. In terms of assembly, belongs to the CWC complex (or CEF1-associated complex), a spliceosome sub-complex reminiscent of a late-stage spliceosome composed of the U2, U5 and U6 snRNAs and at least BUD13, BUD31, BRR2, CDC40, CEF1, CLF1, CUS1, CWC2, CWC15, CWC21, CWC22, CWC23, CWC24, CWC25, CWC27, ECM2, HSH155, IST3, ISY1, LEA1, MSL1, NTC20, PRP8, PRP9, PRP11, PRP19, PRP21, PRP22, PRP45, PRP46, SLU7, SMB1, SMD1, SMD2, SMD3, SMX2, SMX3, SNT309, SNU114, SPP2, SYF1, SYF2, RSE1 and YJU2. Component of the U4/U6-U5 tri-snRNP complex composed of the U4, U6 and U5 snRNAs and at least PRP3, PRP4, PRP6, PRP8, PRP18, PRP31, PRP38, SNU13, SNU23, SNU66, SNU114, SPP381, SMB1, SMD1, SMD2, SMD3, SMX2, SMX3, LSM2, LSM3, LSM4, LSM5, LSM6, LSM7, LSM8, BRR2 and DIB1. Interacts (via C-terminus) with CWC21. Interacts (via N-terminus) with PRP8 (via SCwid domain).

It is found in the nucleus. In terms of biological role, component of the U5 snRNP complex required for pre-mRNA splicing. Binds GTP. The sequence is that of Pre-mRNA-splicing factor SNU114 (SNU114) from Saccharomyces cerevisiae (strain ATCC 204508 / S288c) (Baker's yeast).